The primary structure comprises 222 residues: N-acetyltransferase 8 (222 aa).

Residues methionine 1 to histidine 35 are Cytoplasmic-facing. Residues leucine 36–valine 56 traverse the membrane as a helical; Signal-anchor for type II membrane protein segment. The Lumenal portion of the chain corresponds to serine 57–serine 222. The 156-residue stretch at leucine 62 to tyrosine 217 folds into the N-acetyltransferase domain.

This sequence belongs to the NAT8 family.

The protein resides in the endoplasmic reticulum-Golgi intermediate compartment membrane. It is found in the endoplasmic reticulum membrane. The catalysed reaction is L-lysyl-[protein] + acetyl-CoA = N(6)-acetyl-L-lysyl-[protein] + CoA + H(+). It catalyses the reaction an S-substituted L-cysteine + acetyl-CoA = an N-acetyl-L-cysteine-S-conjugate + CoA + H(+). Its pathway is sulfur metabolism; glutathione metabolism. In terms of biological role, endoplasmic reticulum-membrane(ER)-bound lysine N-acetyltransferase catalyzing the N6-acetylation of lysine residues in the lumen of the ER in various proteins, including PROM1 and BACE1, using acetyl-CoA as acetyl donor. Thereby, may regulate apoptosis through the acetylation and the regulation of the expression of PROM1. May also regulate amyloid beta-peptide secretion through acetylation of BACE1 and the regulation of its expression in neurons. N(6)-lysine acetylation in the ER maintains protein homeostasis and regulates reticulophagy. Alternatively, acetylates the free alpha-amino group of cysteine S-conjugates to form mercapturic acids. This is the final step in a major route for detoxification of a wide variety of reactive electrophiles which starts with their incorporation into glutathione S-conjugates. The glutathione S-conjugates are then further processed into cysteine S-conjugates and finally mercapturic acids which are water soluble and can be readily excreted in urine or bile. This is N-acetyltransferase 8 (Nat8) from Rattus norvegicus (Rat).